The following is a 495-amino-acid chain: Glutamate--tRNA ligase (495 aa).

Positions 13–23 (PSPTGTPHVGL) match the 'HIGH' region motif. The 'KMSKS' region motif lies at 257–261 (KLSKR). Lysine 260 lines the ATP pocket.

The protein belongs to the class-I aminoacyl-tRNA synthetase family. Glutamate--tRNA ligase type 1 subfamily. Monomer.

The protein localises to the cytoplasm. It carries out the reaction tRNA(Glu) + L-glutamate + ATP = L-glutamyl-tRNA(Glu) + AMP + diphosphate. Functionally, catalyzes the attachment of glutamate to tRNA(Glu) in a two-step reaction: glutamate is first activated by ATP to form Glu-AMP and then transferred to the acceptor end of tRNA(Glu). In Mycolicibacterium vanbaalenii (strain DSM 7251 / JCM 13017 / BCRC 16820 / KCTC 9966 / NRRL B-24157 / PYR-1) (Mycobacterium vanbaalenii), this protein is Glutamate--tRNA ligase.